We begin with the raw amino-acid sequence, 70 residues long: uncharacterized protein (70 aa).

A helical transmembrane segment spans residues 50 to 70 (INVVLVLIIALIIFILMLDGV).

It is found in the membrane. This is an uncharacterized protein from Dictyostelium discoideum (Social amoeba).